A 1232-amino-acid polypeptide reads, in one-letter code: Histone-lysine N-methyltransferase MECOM (1232 aa).

Positions 22 to 68 (PEIPLEEMPDADADGITSVPSLHIQEPCSPATSSESFTPKEGSPYKA) are disordered. Positions 25 to 34 (PLEEMPDADA) are enriched in acidic residues. An SET domain is found at 80-192 (DEFELRESTM…PGEELLLFMK (113 aa)). Residues lysine 101 and lysine 192 each participate in a glycyl lysine isopeptide (Lys-Gly) (interchain with G-Cter in SUMO2) cross-link. Residues 191-442 (MKSEEDPHEP…NHFAAGGFFG (252 aa)) are interaction with SUV39H1 and probably MAPK9 and SMAD3. 5 C2H2-type zinc fingers span residues 211-238 (HRCE…STPH), 265-287 (QDCK…MLSH), 293-315 (YKCD…QMSH), 321-344 (YECE…RSQH), and 350-372 (HACP…KHIH). Residue lysine 294 forms a Glycyl lysine isopeptide (Lys-Gly) (interchain with G-Cter in SUMO2) linkage. Residues lysine 369 and lysine 376 each participate in a glycyl lysine isopeptide (Lys-Gly) (interchain with G-Cter in SUMO2) cross-link. The C2H2-type 6 zinc-finger motif lies at 378–400 (FICEVCHKSYTQFSNLCRHKRMH). The C2H2-type 7; atypical zinc-finger motif lies at 407 to 429 (IKCKDCGQMFSTTSSLNKHRRFC). Residues lysine 432, lysine 525, lysine 545, lysine 549, and lysine 557 each participate in a glycyl lysine isopeptide (Lys-Gly) (interchain with G-Cter in SUMO2) cross-link. The disordered stretch occupies residues 548 to 622 (SKHPPVGDNK…KCKENGKMFK (75 aa)). Residues 562-577 (LPERSSEERPLEKISD) are compositionally biased toward basic and acidic residues. Positions 588-600 (STPSGSDLETTSG) are enriched in polar residues. Basic and acidic residues predominate over residues 608-622 (ESDKEKCKENGKMFK). Positions 611-624 (KEKCKENGKMFKDK) match the Nuclear localization signal motif. Lysine 624 is covalently cross-linked (Glycyl lysine isopeptide (Lys-Gly) (interchain with G-Cter in SUMO2)). Phosphoserine is present on serine 626. Residues lysine 637, lysine 665, lysine 687, and lysine 723 each participate in a glycyl lysine isopeptide (Lys-Gly) (interchain with G-Cter in SUMO2) cross-link. The segment at 720–823 (LPLKMEPQSP…DGSLQHARPT (104 aa)) is disordered. Serine 728 carries the post-translational modification Phosphoserine. Residues lysine 733, lysine 734, and lysine 737 each participate in a glycyl lysine isopeptide (Lys-Gly) (interchain with G-Cter in SUMO2) cross-link. Residue serine 742 is modified to Phosphoserine. The CTBP-binding motif 1 motif lies at 743–747 (PFDLT). Glycyl lysine isopeptide (Lys-Gly) (interchain with G-Cter in SUMO2) cross-links involve residues lysine 751, lysine 754, and lysine 762. Residues 758-773 (SGPSKPSGTPATSQDQ) are compositionally biased toward polar residues. A CTBP-binding motif 2 motif is present at residues 774-778 (PLDLS). Glycyl lysine isopeptide (Lys-Gly) (interchain with G-Cter in SUMO2) cross-links involve residues lysine 789, lysine 802, and lysine 803. A compositionally biased stretch (basic and acidic residues) spans 791–805 (TEPRKNHVFGEKKGS). Over residues 806 to 816 (NMDTRPSSDGS) the composition is skewed to polar residues. Residues lysine 837, lysine 846, lysine 848, and lysine 879 each participate in a glycyl lysine isopeptide (Lys-Gly) (interchain with G-Cter in SUMO2) cross-link. 3 C2H2-type zinc fingers span residues 914–936 (YTCR…LRTH), 942–965 (YRCK…RNIH), and 971–993 (FKCH…LKKH). Residue lysine 1020 forms a Glycyl lysine isopeptide (Lys-Gly) (interchain with G-Cter in SUMO2) linkage. The span at 1032–1043 (IGNSNHGSQSPR) shows a compositional bias: polar residues. A disordered region spans residues 1032 to 1107 (IGNSNHGSQS…GVTRLDEEIP (76 aa)). Serine 1039 and serine 1041 each carry phosphoserine. Basic and acidic residues predominate over residues 1044–1059 (NMEERMNGSHFKDKKA). Glycyl lysine isopeptide (Lys-Gly) (interchain with G-Cter in SUMO2) cross-links involve residues lysine 1055 and lysine 1058. Over residues 1068–1088 (LLDDEEVEDEVLLDEEDEDND) the composition is skewed to acidic residues. Over residues 1089-1104 (IPGKPRKELGVTRLDE) the composition is skewed to basic and acidic residues. Residues lysine 1122, lysine 1129, lysine 1134, lysine 1151, lysine 1178, and lysine 1186 each participate in a glycyl lysine isopeptide (Lys-Gly) (interchain with G-Cter in SUMO2) cross-link.

Homooligomer. Interacts with CTBP1. Interacts with SMAD3 (via MH2 domain); the interaction is direct. Interacts with SMAD4; through interaction with SMAD3. Interacts with CREBBP, KAT2B and histone deacetylases. Interacts with MAPK8 and MAPK9; inhibits JNK signaling. Interacts with SUV39H1 (via SET domain); enhances MECOM transcriptional repression activity. In terms of processing, may be acetylated by CREBBP and KAT2B.

It localises to the nucleus. The protein localises to the nucleus speckle. Its subcellular location is the cytoplasm. The catalysed reaction is L-lysyl(9)-[histone H3] + S-adenosyl-L-methionine = N(6)-methyl-L-lysyl(9)-[histone H3] + S-adenosyl-L-homocysteine + H(+). Functions as a transcriptional regulator binding to DNA sequences in the promoter region of target genes and regulating positively or negatively their expression. Oncogene which plays a role in development, cell proliferation and differentiation. May also play a role in apoptosis through regulation of the JNK and TGF-beta signaling. Involved in hematopoiesis. Functionally, displays histone methyltransferase activity and monomethylates 'Lys-9' of histone H3 (H3K9me1) in vitro. Probably catalyzes the monomethylation of free histone H3 in the cytoplasm which is then transported to the nucleus and incorporated into nucleosomes where SUV39H methyltransferases use it as a substrate to catalyze histone H3 'Lys-9' trimethylation. Likely to be one of the primary histone methyltransferases along with PRDM16 that direct cytoplasmic H3K9me1 methylation. This Mus musculus (Mouse) protein is Histone-lysine N-methyltransferase MECOM.